Here is a 150-residue protein sequence, read N- to C-terminus: D-aminoacyl-tRNA deacylase (150 aa).

The short motif at 138–139 (GP) is the Gly-cisPro motif, important for rejection of L-amino acids element.

Belongs to the DTD family. Homodimer.

It is found in the cytoplasm. The enzyme catalyses glycyl-tRNA(Ala) + H2O = tRNA(Ala) + glycine + H(+). It catalyses the reaction a D-aminoacyl-tRNA + H2O = a tRNA + a D-alpha-amino acid + H(+). In terms of biological role, an aminoacyl-tRNA editing enzyme that deacylates mischarged D-aminoacyl-tRNAs. Also deacylates mischarged glycyl-tRNA(Ala), protecting cells against glycine mischarging by AlaRS. Acts via tRNA-based rather than protein-based catalysis; rejects L-amino acids rather than detecting D-amino acids in the active site. By recycling D-aminoacyl-tRNA to D-amino acids and free tRNA molecules, this enzyme counteracts the toxicity associated with the formation of D-aminoacyl-tRNA entities in vivo and helps enforce protein L-homochirality. This Bacteroides fragilis (strain ATCC 25285 / DSM 2151 / CCUG 4856 / JCM 11019 / LMG 10263 / NCTC 9343 / Onslow / VPI 2553 / EN-2) protein is D-aminoacyl-tRNA deacylase.